The following is a 1017-amino-acid chain: Sodium/potassium-transporting ATPase subunit alpha-2 (1017 aa).

The tract at residues 1–31 (MDGREYSPAATTSENGGGRRKQKEKELDELK) is disordered. Over 1 to 82 (MDGREYSPAA…NALTPPPTTP (82 aa)) the chain is Cytoplasmic. An interaction with phosphoinositide-3 kinase region spans residues 77–79 (PPP). The chain crosses the membrane as a helical span at residues 83–103 (EWVKFCRQLFGGFSILLWIGA). Residues 104 to 126 (ILCFLAYGIQAAMEDEPSNDNLY) lie on the Extracellular side of the membrane. The helical transmembrane segment at 127–147 (LGVVLAAVVIVTGCFSYYQEA) threads the bilayer. Residues 148–283 (KSSKIMDSFK…VGRTPIAMEI (136 aa)) are Cytoplasmic-facing. A disordered region spans residues 207–228 (KVDNSSLTGESEPQTRSPEFTH). Residues 209-224 (DNSSLTGESEPQTRSP) are compositionally biased toward polar residues. A helical membrane pass occupies residues 284–303 (EHFIRLITGVAVFLGLSFFI). Residues 304–315 (LSLILGYTWLEA) lie on the Extracellular side of the membrane. Residues 316-333 (VIFLIGIIVANVPEGLLA) form a helical membrane-spanning segment. The Cytoplasmic segment spans residues 334–766 (TVTVCLTLTA…EEGRLIFDNL (433 aa)). The 4-aspartylphosphate intermediate role is filled by D371. ATP is bound at residue K502. 2 residues coordinate Mg(2+): D711 and D715. Residues 767–786 (KKSIAYTLTSNIPEITPFLL) traverse the membrane as a helical segment. Over 787–796 (FIIANIPLPL) the chain is Extracellular. Residues 797-817 (GTVTILCIDLGTDMVPAISLA) traverse the membrane as a helical segment. At 818 to 837 (YEAAESDIMKRQPRNPRTDK) the chain is on the cytoplasmic side. Residues 838 to 860 (LVNERLISMAYGQIGMIQALGGF) traverse the membrane as a helical segment. Residues 861–912 (FTYFVILAENGFLPARLLGVRLAWDDRSTNDLEDSYGQEWTYEQRKVVEFTC) lie on the Extracellular side of the membrane. The helical transmembrane segment at 913–932 (HTAFFASIVVVQWADLIICK) threads the bilayer. The Cytoplasmic portion of the chain corresponds to 933–945 (TRRNSVFQQGMKN). The residue at position 937 (S937) is a Phosphoserine; by PKA. Residues 946-964 (KILIFGLLEETALAAFLSY) form a helical membrane-spanning segment. Topologically, residues 965–979 (CPGMGVALRMYPLKV) are extracellular. A helical transmembrane segment spans residues 980–1000 (TWWFCAFPYSLLIFAYDEVRK). The Cytoplasmic segment spans residues 1001–1017 (LILRRYPGGWVEKETYY).

Belongs to the cation transport ATPase (P-type) (TC 3.A.3) family. Type IIC subfamily. The sodium/potassium-transporting ATPase is composed of a catalytic alpha subunit, an auxiliary non-catalytic beta subunit and an additional regulatory subunit.

Its subcellular location is the membrane. It is found in the cell membrane. The enzyme catalyses K(+)(out) + Na(+)(in) + ATP + H2O = K(+)(in) + Na(+)(out) + ADP + phosphate + H(+). This is the catalytic component of the active enzyme, which catalyzes the hydrolysis of ATP coupled with the exchange of sodium and potassium ions across the plasma membrane. This action creates the electrochemical gradient of sodium and potassium ions, providing the energy for active transport of various nutrients. This is Sodium/potassium-transporting ATPase subunit alpha-2 (ATP1A2) from Gallus gallus (Chicken).